The chain runs to 853 residues: Replication protein A 70 kDa DNA-binding subunit C (853 aa).

The interval 118 to 282 (PKEPGHSSIN…QSAYQPQQPP (165 aa)) is disordered. 6 stretches are compositionally biased toward polar residues: residues 124–144 (SSIN…SEQQ), 159–173 (SANS…NSSD), 180–194 (SANS…SSSD), 201–211 (SANSPQRQVVH), 222–249 (PQVS…SSNA), and 263–278 (TATT…AYQP). Residues 312 to 399 (WTIKVRVTSK…NDYEIHLDSA (88 aa)) constitute a DNA-binding region (OB). A C4-type zinc finger spans residues 602–628 (CPIMNGDRPCSKKVTNNGDGTWRCEKC).

The protein belongs to the replication factor A protein 1 family. As to quaternary structure, heterotrimer of RPA1, RPA2 and RPA3 (canonical replication protein A complex).

Its subcellular location is the nucleus. In terms of biological role, component of the replication protein A complex (RPA) required for DNA recombination, repair and replication. The activity of RPA is mediated by single-stranded DNA binding and protein interactions. Probably involved in repair of double-strand DNA breaks (DSBs) induced by genotoxic stresses. In Arabidopsis thaliana (Mouse-ear cress), this protein is Replication protein A 70 kDa DNA-binding subunit C (RPA1C).